We begin with the raw amino-acid sequence, 406 residues long: FBD-associated F-box protein At1g60410 (406 aa).

Residues 9–59 (KDRLSDLPCHLLCRILSNLSTKESVRTSVLSPRWSNLWSLVSVLDLDFQDF) form the F-box domain. The region spanning 355 to 405 (MEEIKLSPVPQCVLSSLDFLQLKAPSTPSKMKLATYFRKKCTRLTKMLLSG) is the FBD domain.

This is FBD-associated F-box protein At1g60410 from Arabidopsis thaliana (Mouse-ear cress).